Here is a 120-residue protein sequence, read N- to C-terminus: Seripauperin-6 (120 aa).

A signal peptide spans 1 to 20 (MVKLTSIAAGVAAIAATASA).

It belongs to the SRP1/TIP1 family. Seripauperin subfamily.

The protein is Seripauperin-6 (PAU6) of Saccharomyces cerevisiae (strain ATCC 204508 / S288c) (Baker's yeast).